Reading from the N-terminus, the 243-residue chain is Terpene cyclase ptmB (243 aa).

3 helical membrane passes run 19 to 39 (IANLFVLGMGLGWLINYVGMI), 48 to 68 (YGMAIMPLCCNIAWEIVYSLI), and 78 to 98 (GVFIAGLTINIGVMYAAIKFA). An N-linked (GlcNAc...) asparagine glycan is attached at Asn-111. 4 helical membrane passes run 112-132 (LSLIFFLATLGFLTGHLALAA), 137-157 (SLAYSWGAVVCQLLLSVGGLC), 172-194 (LWLSRFLGSSCTVGFASLRWMYW), and 205-225 (LVLWSLALFLTVDGSYGICYW).

This sequence belongs to the paxB family.

The protein resides in the membrane. Its pathway is secondary metabolite biosynthesis. In terms of biological role, terpene cyclase; part of the gene cluster that mediates the biosynthesis of the indole diterpenes penitrems. The geranylgeranyl diphosphate (GGPP) synthase ptmG catalyzes the first step in penitrem biosynthesis via conversion of farnesyl pyrophosphate and isopentyl pyrophosphate into geranylgeranyl pyrophosphate (GGPP). Condensation of indole-3-glycerol phosphate with GGPP by the prenyl transferase ptmC then forms 3-geranylgeranylindole (3-GGI). Epoxidation by the FAD-dependent monooxygenase ptmM leads to a epoxidized-GGI that is substrate of the terpene cyclase ptmB for cyclization to yield paspaline. Paspaline is subsequently converted to 13-desoxypaxilline by the cytochrome P450 monooxygenase ptmP, the latter being then converted to paxilline by the cytochrome P450 monooxygenase ptmQ. Paxilline is converted to beta-paxitriol via C-10 ketoreduction by the short-chain dehydrogenase ptmH which can be monoprenylated at the C-20 by the indole diterpene prenyltransferase ptmD. A two-step elimination (acetylation and elimination) process performed by the O-acetyltransferase ptmV and ptmI leads to the production of the prenylated form of penijanthine. The FAD-linked oxidoreductase ptmO then converts the prenylated form of penijanthine into PC-M5 which is in turn transformed into PC-M4 by the aromatic dimethylallyltransferase ptmE. Five sequential oxidative transformations performed by the cytochrome P450 monooxygenases ptmK, ptmU, ptmL, ptmN and ptmJ yield the various penitrem compounds. PtmK, ptmU and ptmM are involved in the formation of the key bicyclic ring of penitrem C via the formation of the intermediates secopenitrem D and penitrem D. PtmL catalyzes the epoxidation of penitrem D and C to yield penitrem B and F, respectively. PtmJ catalyzes the last benzylic hydroxylation to convert penitrem B to prenitrem E and penitrem F to penitrem A. In Penicillium ochrochloron, this protein is Terpene cyclase ptmB.